A 407-amino-acid chain; its full sequence is Phosphoglycerate kinase (407 aa).

Residues 24–26 (DIN), arginine 39, 60–63 (HQSR), arginine 117, and arginine 157 contribute to the substrate site. Residues glutamate 330 and 355–358 (GGHI) contribute to the ATP site.

The protein belongs to the phosphoglycerate kinase family.

The protein localises to the cytoplasm. It catalyses the reaction (2R)-3-phosphoglycerate + ATP = (2R)-3-phospho-glyceroyl phosphate + ADP. The protein operates within carbohydrate degradation; glycolysis; pyruvate from D-glyceraldehyde 3-phosphate: step 2/5. The sequence is that of Phosphoglycerate kinase (pgk) from Archaeoglobus fulgidus (strain ATCC 49558 / DSM 4304 / JCM 9628 / NBRC 100126 / VC-16).